Here is a 798-residue protein sequence, read N- to C-terminus: Transferrin receptor protein 2 (798 aa).

Residues 1 to 81 are Cytoplasmic-facing; sequence MEQRWGLLRR…WAAAGRKAAP (81 aa). The Endocytosis signal signature appears at 23-26; it reads YRRV. A helical; Signal-anchor for type II membrane protein membrane pass occupies residues 82–102; that stretch reads YLVLITLLIFTGAFLLGYVAF. Over 103–798 the chain is Extracellular; sequence RGSCQACGDS…GDVWNIDNNF (696 aa). N-linked (GlcNAc...) asparagine glycans are attached at residues N235, N334, and N535.

It belongs to the peptidase M28 family. M28B subfamily. Predominantly expressed in liver. Also expressed in kidney, spleen, brain, lung, heart and muscle with very low expression in kidney, muscle and heart.

Its subcellular location is the cell membrane. It localises to the cytoplasm. Mediates cellular uptake of transferrin-bound iron in a non-iron dependent manner. May be involved in iron metabolism, hepatocyte function and erythrocyte differentiation. This chain is Transferrin receptor protein 2 (Tfr2), found in Mus musculus (Mouse).